Here is a 71-residue protein sequence, read N- to C-terminus: Conotoxin PnMEKL-032 (71 aa).

The first 19 residues, 1–19 (MQKLIILLLVAAVLMSTQA), serve as a signal peptide directing secretion. A propeptide spanning residues 20-46 (LFQEKRLKEKINFLSKEKADAEKQQKR) is cleaved from the precursor. 3 disulfide bridges follow: C48–C62, C55–C66, and C61–C70.

This sequence belongs to the conotoxin O2 superfamily. Expressed by the venom duct.

Its subcellular location is the secreted. This is Conotoxin PnMEKL-032 from Conus pennaceus (Feathered cone).